The chain runs to 223 residues: Ribosomal RNA small subunit methyltransferase G (223 aa).

Residues glycine 85, phenylalanine 90, and arginine 154 each contribute to the S-adenosyl-L-methionine site.

This sequence belongs to the methyltransferase superfamily. RNA methyltransferase RsmG family.

It localises to the cytoplasm. It catalyses the reaction guanosine(527) in 16S rRNA + S-adenosyl-L-methionine = N(7)-methylguanosine(527) in 16S rRNA + S-adenosyl-L-homocysteine. Specifically methylates the N7 position of guanine in position 527 of 16S rRNA. The polypeptide is Ribosomal RNA small subunit methyltransferase G (Rhodopseudomonas palustris (strain TIE-1)).